The primary structure comprises 88 residues: CRISPR-associated endoribonuclease Cas2 2 (88 aa).

A Mg(2+)-binding site is contributed by Asp8.

It belongs to the CRISPR-associated endoribonuclease Cas2 protein family. Homodimer, forms a heterotetramer with a Cas1 homodimer. Mg(2+) is required as a cofactor.

Its function is as follows. CRISPR (clustered regularly interspaced short palindromic repeat), is an adaptive immune system that provides protection against mobile genetic elements (viruses, transposable elements and conjugative plasmids). CRISPR clusters contain sequences complementary to antecedent mobile elements and target invading nucleic acids. CRISPR clusters are transcribed and processed into CRISPR RNA (crRNA). Functions as a ssRNA-specific endoribonuclease. Involved in the integration of spacer DNA into the CRISPR cassette. This chain is CRISPR-associated endoribonuclease Cas2 2 (cas22), found in Saccharolobus solfataricus (strain ATCC 35092 / DSM 1617 / JCM 11322 / P2) (Sulfolobus solfataricus).